The sequence spans 354 residues: Phospho-N-acetylmuramoyl-pentapeptide-transferase (354 aa).

A run of 10 helical transmembrane segments spans residues 23–43 (IAFF…IAWA), 66–86 (TPTM…LLCS), 88–108 (LTNT…FIGF), 138–158 (FALS…FIPF), 161–181 (YALF…ITAS), 193–213 (GLAS…VYLC), 227–247 (VVGV…ILGF), 257–277 (VFMG…TGVV), 282–302 (ILLI…ILQV), and 331–351 (KIIV…LTTL).

It belongs to the glycosyltransferase 4 family. MraY subfamily. It depends on Mg(2+) as a cofactor.

The protein localises to the cell inner membrane. The enzyme catalyses UDP-N-acetyl-alpha-D-muramoyl-L-alanyl-gamma-D-glutamyl-meso-2,6-diaminopimeloyl-D-alanyl-D-alanine + di-trans,octa-cis-undecaprenyl phosphate = di-trans,octa-cis-undecaprenyl diphospho-N-acetyl-alpha-D-muramoyl-L-alanyl-D-glutamyl-meso-2,6-diaminopimeloyl-D-alanyl-D-alanine + UMP. The protein operates within cell wall biogenesis; peptidoglycan biosynthesis. Its function is as follows. Catalyzes the initial step of the lipid cycle reactions in the biosynthesis of the cell wall peptidoglycan: transfers peptidoglycan precursor phospho-MurNAc-pentapeptide from UDP-MurNAc-pentapeptide onto the lipid carrier undecaprenyl phosphate, yielding undecaprenyl-pyrophosphoryl-MurNAc-pentapeptide, known as lipid I. The polypeptide is Phospho-N-acetylmuramoyl-pentapeptide-transferase (Campylobacter hominis (strain ATCC BAA-381 / DSM 21671 / CCUG 45161 / LMG 19568 / NCTC 13146 / CH001A)).